The following is a 535-amino-acid chain: MGMFFNLRSNIKKKAMDNGLSLPISRNGSSNNIKDKRSEHNSNSLKGKYRYQPRSTPSKFQLTVSITSLIIIAVLSLYLFISFLSGMGIGVSTQNGRSLLGSSKSSENYKTIDLEDEEYYDYDFEDIDPEVISKFDDGVQHYLISQFGSEVLTPKDDEKYQRELNMLFDSTVEEYDLSNFEGAPNGLETRDHILLCIPLRNAADVLPLMFKHLMNLTYPHELIDLAFLVSDCSEGDTTLDALIAYSRHLQNGTLSQIFQEIDAVIDSQTKGTDKLYLKYMDEGYINRVHQAFSPPFHENYDKPFRSVQIFQKDFGQVIGQGFSDRHAVKVQGIRRKLMGRARNWLTANALKPYHSWVYWRDADVELCPGSVIQDLMSKNYDVIVPNVWRPLPTFLGTEQPYDLNSWMESQEALALAKTLDEDDVIVEGYAEYPTWRVHLAYIRDAEGDPNEAVDLDGVGGVSILAKAKIFRNGVQFPAFTFENHAETEAFGKMAKKMGYRVGGLPHYTIWHIYEPSDDDLKEIASREREKRRQSE.

At 1–64 (MGMFFNLRSN…STPSKFQLTV (64 aa)) the chain is on the cytoplasmic side. Positions 22 to 48 (LPISRNGSSNNIKDKRSEHNSNSLKGK) are disordered. S25 is subject to Phosphoserine. The helical; Signal-anchor for type II membrane protein transmembrane segment at 65-81 (SITSLIIIAVLSLYLFI) threads the bilayer. At 82-535 (SFLSGMGIGV…REREKRRQSE (454 aa)) the chain is on the lumenal side. Residues N215 and N251 are each glycosylated (N-linked (GlcNAc...) asparagine).

This sequence belongs to the ANP1/MMN9/VAN1 family. In terms of assembly, component of the M-Pol I complex which contains MNN9 and VAN1. Post-translationally, glycosylated.

The protein localises to the endoplasmic reticulum membrane. It is found in the golgi apparatus membrane. In terms of biological role, involved in regulation of the phosphorylation of a number of proteins, some of which appear to be important in cell growth control. The M-Pol I complex possesses alpha-1,6-mannosyltransferase activity and is probably involved in the elongation of the mannan backbone of N-linked glycans on cell wall and periplasmic proteins. The chain is Mannan polymerase I complex VAN1 subunit (VAN1) from Saccharomyces cerevisiae (strain ATCC 204508 / S288c) (Baker's yeast).